The primary structure comprises 690 residues: Secreted LysM effector Vd5LysM (690 aa).

Asparagine 4 and asparagine 69 each carry an N-linked (GlcNAc...) asparagine glycan. 3 LysM domains span residues 203–248 (TQYT…SLCI), 253–301 (DTVT…TLCI), and 341–387 (RWYN…SYCV). Residues asparagine 260, asparagine 295, asparagine 375, asparagine 410, asparagine 423, and asparagine 492 are each glycosylated (N-linked (GlcNAc...) asparagine). Residues 523 to 546 (PATATTGDGGPTPPAPTHSGQPQD) form a disordered region. In terms of domain architecture, LysM 4 spans 549 to 596 (TWHVVSSGDSCQSVADDAGISRDQFHDWNPAVGRDCSTNFWLGQAYCV). Over residues 606–619 (STVASSTTSSVTPG) the composition is skewed to low complexity. Residues 606 to 636 (STVASSTTSSVTPGPSKPEPPGPTHTGQPSD) form a disordered region. In terms of domain architecture, LysM 5 spans 639–686 (EWDVVETGDTCGSLAESNDISLSQFFDWNPAVSRDCVANFWIGQAYCI).

The protein belongs to the secreted LysM effector family.

Functionally, might have a role in sequestration of chitin oligosaccharides (breakdown products of fungal cell walls that are released during invasion and act as triggers of host immunity) to dampen host defense. Does not play an important role during host colonization. This is Secreted LysM effector Vd5LysM from Verticillium dahliae (strain VdLs.17 / ATCC MYA-4575 / FGSC 10137) (Verticillium wilt).